Consider the following 316-residue polypeptide: Acetyl-coenzyme A carboxylase carboxyl transferase subunit beta (316 aa).

The CoA carboxyltransferase N-terminal domain maps to 39–308 (LWHKCSKCGV…TPPMVLWETM (270 aa)). 4 residues coordinate Zn(2+): Cys43, Cys46, Cys62, and Cys65. The segment at 43-65 (CSKCGVLTYTKDLRANQMVCVEC) adopts a C4-type zinc-finger fold.

Belongs to the AccD/PCCB family. In terms of assembly, acetyl-CoA carboxylase is a heterohexamer composed of biotin carboxyl carrier protein (AccB), biotin carboxylase (AccC) and two subunits each of ACCase subunit alpha (AccA) and ACCase subunit beta (AccD). It depends on Zn(2+) as a cofactor.

It localises to the cytoplasm. The catalysed reaction is N(6)-carboxybiotinyl-L-lysyl-[protein] + acetyl-CoA = N(6)-biotinyl-L-lysyl-[protein] + malonyl-CoA. Its pathway is lipid metabolism; malonyl-CoA biosynthesis; malonyl-CoA from acetyl-CoA: step 1/1. Functionally, component of the acetyl coenzyme A carboxylase (ACC) complex. Biotin carboxylase (BC) catalyzes the carboxylation of biotin on its carrier protein (BCCP) and then the CO(2) group is transferred by the transcarboxylase to acetyl-CoA to form malonyl-CoA. The polypeptide is Acetyl-coenzyme A carboxylase carboxyl transferase subunit beta (Trichormus variabilis (strain ATCC 29413 / PCC 7937) (Anabaena variabilis)).